A 356-amino-acid polypeptide reads, in one-letter code: Delta(7)-sterol 5(6)-desaturase (356 aa).

Transmembrane regions (helical) follow at residues 87–107, 134–154, and 171–191; these read LTLY…FAGL, QANI…LAEV, and WYDY…IYWI. Residues 179–303 form the Fatty acid hydroxylase domain; that stretch reads FFIAFTDLCI…FTTLWDRLGG (125 aa). A Histidine box-1 motif is present at residues 192–196; it reads HRGLH. The Histidine box-2 signature appears at 205 to 209; that stretch reads HKPHH. The helical transmembrane segment at 235–255 threads the bilayer; that stretch reads YIFPFLFPLSKIASVAFFVFV. Residues 280-284 carry the Histidine box-3 motif; that stretch reads HTMHH.

The protein belongs to the sterol desaturase family. It depends on Fe cation as a cofactor.

It localises to the endoplasmic reticulum membrane. It carries out the reaction a Delta(7)-sterol + 2 Fe(II)-[cytochrome b5] + O2 + 2 H(+) = a Delta(5),Delta(7)-sterol + 2 Fe(III)-[cytochrome b5] + 2 H2O. It functions in the pathway steroid metabolism; ergosterol biosynthesis; ergosterol from zymosterol: step 3/5. Its function is as follows. Catalyzes the introduction of a C-5 double bond in the B ring of ergosterol. May contribute to the regulation of ergosterol biosynthesis. The polypeptide is Delta(7)-sterol 5(6)-desaturase (ERG3) (Leptosphaeria maculans (Blackleg fungus)).